The chain runs to 511 residues: Glucans biosynthesis protein G (511 aa).

A signal peptide spans 1–22 (MMKMRWLGAAIMLTLYASSSWA).

This sequence belongs to the OpgD/OpgG family.

The protein localises to the periplasm. It functions in the pathway glycan metabolism; osmoregulated periplasmic glucan (OPG) biosynthesis. In terms of biological role, involved in the biosynthesis of osmoregulated periplasmic glucans (OPGs). The protein is Glucans biosynthesis protein G of Salmonella enteritidis PT4 (strain P125109).